A 172-amino-acid chain; its full sequence is uncharacterized protein (172 aa).

The span at 1–28 (MAAAGVTAKAGGGTSAAAASLIRARSPA) shows a compositional bias: low complexity. The interval 1-172 (MAAAGVTAKA…GGRRSGRDAG (172 aa)) is disordered. The span at 58-68 (PRRRSRARRGH) shows a compositional bias: basic residues. Gly residues predominate over residues 80–100 (TVGGEGQASQIGGGGGGGGGR). The span at 129–138 (PGLASSPGVA) shows a compositional bias: low complexity. A compositionally biased stretch (gly residues) spans 139–165 (PAGGSGGLWSGAGLCSGLGARGFPGGR).

This is an uncharacterized protein from Homo sapiens (Human).